The following is a 464-amino-acid chain: MTHSLTMAAYIVAGVLFILALRGLSNPESARNGNRMGMVGMAIAILTTLLSPSVQAYAWIVLAIAIGGAIGTVIAKKVLMTALPQLVAAFHSLVGMAAVLVATGALLNPEAYGIGSAGAIHAGSLVEMSLGLAVGAITFSGSVIAFGKLQGLIAGKPVTFPMQHPLNAVLGILLVVLLVVFAATESHTAYFALMILAFALGFLLIIPIGGADMPVVISMLNSYSGWAAAGIGFTLGNPLLIIAGALVGSSGAILSYIMCKGMNRSIFNVILGGFGSEGGVAAAGGAAGDRSVKAGSAEDAAFIMKNASKVIIVPGYGMAVAQAQHALREMADVLKKEGVEVSYAIHPVAGRMPGHMNVLLAEANVPYDEVFELEEINSSFQTADVAFVIGANDVTNPAAKTDPSSPIYGMPILDVEKAGTVLFIKRSMASGYAGVENELFFRNNTMMLFGDAKKMTEQIVQAMN.

The next 6 helical transmembrane spans lie at 54-74 (VQAYAWIVLAIAIGGAIGTVI), 86-106 (LVAAFHSLVGMAAVLVATGAL), 126-146 (VEMSLGLAVGAITFSGSVIAF), 164-184 (HPLNAVLGILLVVLLVVFAAT), 191-211 (FALMILAFALGFLLIIPIGGA), and 227-247 (AAAGIGFTLGNPLLIIAGALV). Residues 316–317 (YG), 348–353 (VAGRMP), 390–394 (GANDV), 425–432 (KRSMASGY), and 451–452 (DA) each bind NADP(+).

This sequence belongs to the PNT beta subunit family. As to quaternary structure, complex of an alpha and a beta chain; in Rhodospirillum, the alpha chain seems to be made of two subunits.

Its subcellular location is the cell inner membrane. It catalyses the reaction NAD(+) + NADPH + H(+)(in) = NADH + NADP(+) + H(+)(out). The transhydrogenation between NADH and NADP is coupled to respiration and ATP hydrolysis and functions as a proton pump across the membrane. This is NAD(P) transhydrogenase subunit beta (pntB) from Rhodospirillum rubrum (strain ATCC 11170 / ATH 1.1.1 / DSM 467 / LMG 4362 / NCIMB 8255 / S1).